We begin with the raw amino-acid sequence, 399 residues long: Arginase (399 aa).

4 residues coordinate Mn(2+): histidine 193, aspartate 216, histidine 218, and aspartate 220. Substrate-binding positions include 218-222 (HADIN), 229-231 (SGN), and aspartate 273. Mn(2+)-binding residues include aspartate 322 and aspartate 324. Positions 336 and 367 each coordinate substrate.

It belongs to the arginase family. The cofactor is Mn(2+).

Its subcellular location is the cytoplasm. The enzyme catalyses L-arginine + H2O = urea + L-ornithine. It participates in nitrogen metabolism; urea cycle; L-ornithine and urea from L-arginine: step 1/1. The polypeptide is Arginase (CAR1) (Eremothecium gossypii (strain ATCC 10895 / CBS 109.51 / FGSC 9923 / NRRL Y-1056) (Yeast)).